The chain runs to 118 residues: Large ribosomal subunit protein uL18 (118 aa).

A disordered region spans residues 1–25 (MISKPDKNKLRQKRHRRVRGKLSGT). Over residues 10 to 20 (LRQKRHRRVRG) the composition is skewed to basic residues.

The protein belongs to the universal ribosomal protein uL18 family. As to quaternary structure, part of the 50S ribosomal subunit; part of the 5S rRNA/L5/L18/L25 subcomplex. Contacts the 5S and 23S rRNAs.

This is one of the proteins that bind and probably mediate the attachment of the 5S RNA into the large ribosomal subunit, where it forms part of the central protuberance. This is Large ribosomal subunit protein uL18 from Streptococcus pneumoniae (strain Hungary19A-6).